Here is an 86-residue protein sequence, read N- to C-terminus: Small ribosomal subunit protein bS20 (86 aa).

Belongs to the bacterial ribosomal protein bS20 family.

Binds directly to 16S ribosomal RNA. In Pseudarthrobacter chlorophenolicus (strain ATCC 700700 / DSM 12829 / CIP 107037 / JCM 12360 / KCTC 9906 / NCIMB 13794 / A6) (Arthrobacter chlorophenolicus), this protein is Small ribosomal subunit protein bS20.